The chain runs to 545 residues: Adenine deaminase (545 aa).

This sequence belongs to the metallo-dependent hydrolases superfamily. Adenine deaminase family. Requires Mn(2+) as cofactor.

It catalyses the reaction adenine + H2O + H(+) = hypoxanthine + NH4(+). This Salinibacter ruber (strain DSM 13855 / M31) protein is Adenine deaminase.